A 361-amino-acid chain; its full sequence is MIPFPTERLDAILARHDIVTAQLASGEIDPETVVQLSRELSDLDPVVAAIRAYRAALENLAGVEALIDEPGTDPEMRALAAEEKPEALAALETAHRALQLLLLPKDAADEKSAILEVRAGTGGDEAALFAGDLFRMYAKYAESKGWRVEVISESEGTVGGFREVVAEVKGRGVFARLKFESGAHRVQRVPDTETQGRIHTSAATVAVLPEAEEVDIHVNDADLKIDTMRAQGAGGQHVNKTESAIRITHLPTGIVVFVQEERSQHKNRARAMALLRARLYEAERNAKDSARAADRKAQVGSGDRSERIRTYNFPQGRVTDHRINLTLYKLEEVMAGTALDEVVDALITEHQAELLAAEGMA.

Glutamine 236 is subject to N5-methylglutamine. Positions 285–309 are enriched in basic and acidic residues; it reads NAKDSARAADRKAQVGSGDRSERIR. The disordered stretch occupies residues 285–312; that stretch reads NAKDSARAADRKAQVGSGDRSERIRTYN.

It belongs to the prokaryotic/mitochondrial release factor family. In terms of processing, methylated by PrmC. Methylation increases the termination efficiency of RF1.

Its subcellular location is the cytoplasm. Its function is as follows. Peptide chain release factor 1 directs the termination of translation in response to the peptide chain termination codons UAG and UAA. This chain is Peptide chain release factor 1, found in Methylobacterium radiotolerans (strain ATCC 27329 / DSM 1819 / JCM 2831 / NBRC 15690 / NCIMB 10815 / 0-1).